We begin with the raw amino-acid sequence, 212 residues long: Endothelin-1 (212 aa).

Residues 1–17 (MDYLLMIFSLLFVACQG) form the signal peptide. Positions 18-50 (APETAVLGAELSAVGENGGEKPTPSPPWRLRRS) are excised as a propeptide. 2 disulfides stabilise this stretch: Cys53–Cys67 and Cys55–Cys63. A propeptide spanning residues 74–212 (VNTPEHVVPY…RYVTHNRAHW (139 aa)) is cleaved from the precursor. Residues 109–123 (CQCASQKDKKCWNFC) form an endothelin-like region. 2 stretches are compositionally biased toward basic and acidic residues: residues 168–181 (RSSE…RSET) and 189–205 (SFHD…ERYV). The disordered stretch occupies residues 168 to 212 (RSSEEHLRQTRSETMRNSVKSSFHDPKLKGKPSRERYVTHNRAHW).

Belongs to the endothelin/sarafotoxin family. Expressed in lung, placental stem villi vessels and in cultured placental vascular smooth muscle cells.

Its subcellular location is the secreted. In terms of biological role, endothelins are endothelium-derived vasoconstrictor peptides. Probable ligand for G-protein coupled receptors EDNRA and EDNRB which activates PTK2B, BCAR1, BCAR3 and, GTPases RAP1 and RHOA cascade in glomerular mesangial cells. Also binds the DEAR/FBXW7-AS1 receptor. Promotes mesenteric arterial wall remodeling via activation of ROCK signaling and subsequent colocalization of NFATC3 with F-actin filaments. NFATC3 then translocates to the nucleus where it subsequently promotes the transcription of the smooth muscle hypertrophy and differentiation marker ACTA2. This Homo sapiens (Human) protein is Endothelin-1 (EDN1).